The following is a 100-amino-acid chain: Large ribosomal subunit protein eL21 (100 aa).

This sequence belongs to the eukaryotic ribosomal protein eL21 family.

The sequence is that of Large ribosomal subunit protein eL21 from Pyrobaculum arsenaticum (strain DSM 13514 / JCM 11321 / PZ6).